We begin with the raw amino-acid sequence, 294 residues long: Non-selective voltage-gated ion channel VDAC2 (294 aa).

A2 carries the N-acetylalanine modification. ATP contacts are provided by K23 and K31. K31 carries the post-translational modification N6-acetyllysine; alternate. K31 carries the post-translational modification N6-succinyllysine; alternate. Residue K31 forms a Glycyl lysine isopeptide (Lys-Gly) (interchain with G-Cter in ubiquitin); alternate linkage. The next 2 beta stranded transmembrane spans lie at 37-46 and 50-58; these read LVKLDVKTKS and VEFSTSGSS. Glycyl lysine isopeptide (Lys-Gly) (interchain with G-Cter in ubiquitin) cross-links involve residues K64 and K72. Residues 65-75 form a beta stranded membrane-spanning segment; the sequence is VTGTLETKYKW. Y78 is modified (phosphotyrosine). 3 beta stranded membrane passes run 80–87, 91–100, and 106–115; these read LTFTEKWN, TLGTEIAIED, and LKLTFDTTFS. T118 bears the Phosphothreonine mark. K120 is modified (N6-acetyllysine; alternate). K120 participates in a covalent cross-link: Glycyl lysine isopeptide (Lys-Gly) (interchain with G-Cter in ubiquitin); alternate. Glycyl lysine isopeptide (Lys-Gly) (interchain with G-Cter in ubiquitin) cross-links involve residues K121 and K124. The next 4 beta stranded transmembrane spans lie at 122 to 131, 134 to 141, 148 to 156, and 161 to 169; these read SGKIKSSYKR, INLGCDVD, AIHGSAVFG, and LAGYQMTFD. Residue K172 forms a Glycyl lysine isopeptide (Lys-Gly) (interchain with G-Cter in ubiquitin) linkage. The next 6 membrane-spanning stretches (beta stranded) occupy residues 174–186, 189–196, 200–209, 213–222, 229–238, and 242–249; these read KLTRNNFAVGYRT, FQLHTNVN, EFGGSIYQKV, LDTSVNLAWT, RFGIAAKYQL, and ASISAKVN. S251 is modified (phosphoserine). NAD(+)-binding positions include 253–255 and 271–275; these read LIG and SALVD. 2 consecutive transmembrane segments (beta stranded) span residues 253–262 and 265–274; these read LIGVGYTQTL and GVKLTLSALV. N6-acetyllysine; alternate is present on K277. Residue K277 forms a Glycyl lysine isopeptide (Lys-Gly) (interchain with G-Cter in ubiquitin); alternate linkage. A beta stranded transmembrane segment spans residues 284 to 293; that stretch reads HKVGLALELE. K285 is covalently cross-linked (Glycyl lysine isopeptide (Lys-Gly) (interchain with G-Cter in ubiquitin)).

This sequence belongs to the eukaryotic mitochondrial porin family. In terms of assembly, monomer, homodimer and higher order oligomers; formation of higher order structures is necessary for scramblase activity. Interacts with ARMC12 in a TBC1D21-dependent manner. Interacts with KLC3. Interacts with SPATA33. Interacts with PPP3CC in a SPATA33-dependent manner. Post-translationally, ubiquitinated by PRKN during mitophagy, leading to its degradation and enhancement of mitophagy. Deubiquitinated by USP30. Expressed in erythrocytes (at protein level). Expressed in all tissues examined.

It is found in the mitochondrion outer membrane. It localises to the membrane. The enzyme catalyses chloride(in) = chloride(out). It catalyses the reaction K(+)(in) = K(+)(out). It carries out the reaction a 1,2-diacyl-sn-glycero-3-phospho-L-serine(in) = a 1,2-diacyl-sn-glycero-3-phospho-L-serine(out). The catalysed reaction is a 1,2-diacyl-sn-glycero-3-phosphocholine(in) = a 1,2-diacyl-sn-glycero-3-phosphocholine(out). The enzyme catalyses a 1,2-diacyl-sn-glycero-3-phospho-(1D-myo-inositol)(in) = a 1,2-diacyl-sn-glycero-3-phospho-(1D-myo-inositol)(out). Functionally, non-selective voltage-gated ion channel that mediates the transport of anions and cations through the mitochondrion outer membrane and plasma membrane. The channel adopts an open conformation at zero mV and a closed conformation at both positive and negative potentials. There are two populations of channels; the main that functions in a lower open-state conductance with lower ion selectivity, that switch, in a voltage-dependent manner, from the open to a low-conducting 'closed' state and the other that has a normal ion selectivity in the typical high conductance, 'open' state. Binds various lipids, including the sphingolipid ceramide, the phospholipid phosphatidylcholine, and the sterols cholesterol and oxysterol. Binding of ceramide promotes the mitochondrial outer membrane permeabilization (MOMP) apoptotic pathway. Its function is as follows. Catalyzes the scrambling of phospholipids across the outer mitochondrial membrane; the mechanism is unrelated to channel activity and is capable of translocating both anionic and zwitterionic phospholipids. This chain is Non-selective voltage-gated ion channel VDAC2, found in Homo sapiens (Human).